The following is a 370-amino-acid chain: Cobalt-precorrin-5B C(1)-methyltransferase (370 aa).

It belongs to the CbiD family.

The enzyme catalyses Co-precorrin-5B + S-adenosyl-L-methionine = Co-precorrin-6A + S-adenosyl-L-homocysteine. It participates in cofactor biosynthesis; adenosylcobalamin biosynthesis; cob(II)yrinate a,c-diamide from sirohydrochlorin (anaerobic route): step 6/10. Catalyzes the methylation of C-1 in cobalt-precorrin-5B to form cobalt-precorrin-6A. The sequence is that of Cobalt-precorrin-5B C(1)-methyltransferase from Prochlorococcus marinus (strain MIT 9312).